The primary structure comprises 671 residues: DNA ligase (671 aa).

NAD(+)-binding positions include 31 to 35, 80 to 81, and E110; these read DAEYD and SL. The active-site N6-AMP-lysine intermediate is the K112. Residues R133, E167, K283, and K307 each contribute to the NAD(+) site. C401, C404, C419, and C424 together coordinate Zn(2+). One can recognise a BRCT domain in the interval 587-671; sequence EEELVFTGKT…YLPDEGGLNE (85 aa).

It belongs to the NAD-dependent DNA ligase family. LigA subfamily. Requires Mg(2+) as cofactor. The cofactor is Mn(2+).

It carries out the reaction NAD(+) + (deoxyribonucleotide)n-3'-hydroxyl + 5'-phospho-(deoxyribonucleotide)m = (deoxyribonucleotide)n+m + AMP + beta-nicotinamide D-nucleotide.. Functionally, DNA ligase that catalyzes the formation of phosphodiester linkages between 5'-phosphoryl and 3'-hydroxyl groups in double-stranded DNA using NAD as a coenzyme and as the energy source for the reaction. It is essential for DNA replication and repair of damaged DNA. In Listeria monocytogenes serotype 4b (strain F2365), this protein is DNA ligase.